The sequence spans 294 residues: Nucleotide-binding protein Tfu_2020 (294 aa).

An ATP-binding site is contributed by 18–25 (GMSGAGRS). A GTP-binding site is contributed by 69 to 72 (DVRS).

The protein belongs to the RapZ-like family.

Displays ATPase and GTPase activities. This Thermobifida fusca (strain YX) protein is Nucleotide-binding protein Tfu_2020.